The chain runs to 257 residues: Chymotrypsin-like elastase family member 3B (257 aa).

The or 3 signal peptide spans 1–2; that stretch reads VA. The propeptide at 3–15 is activation peptide; that stretch reads SGYGPPSSHPSSR. In terms of domain architecture, Peptidase S1 spans 16–255; the sequence is VVNGEDAVPY…FIDWIEETIA (240 aa). N-linked (GlcNAc...) asparagine glycosylation is present at N38. Disulfide bonds link C45/C61 and C104/C107. H60 acts as the Charge relay system in catalysis. The active-site Charge relay system is D110. Intrachain disulfides connect C144-C210, C175-C191, and C200-C231. The Charge relay system role is filled by S204.

Belongs to the peptidase S1 family. Elastase subfamily.

The catalysed reaction is Preferential cleavage: Ala-|-Xaa. Does not hydrolyze elastin.. Its function is as follows. Efficient protease with alanine specificity but only little elastolytic activity. The sequence is that of Chymotrypsin-like elastase family member 3B (CELA3B) from Macaca mulatta (Rhesus macaque).